The sequence spans 698 residues: Protein CRAC (698 aa).

The PH domain occupies 22 to 122; sequence DVSYSSIMKK…FLTLLIARIR (101 aa). Residues 594-630 form a disordered region; that stretch reads TGGGSVPSSQSTNNLQSSTSSMSSLSSSSTSTTKRSH. Over residues 601–626 the composition is skewed to low complexity; sequence SSQSTNNLQSSTSSMSSLSSSSTSTT.

The protein localises to the cytoplasm. Its function is as follows. Couples activated G protein to adenylyl cyclase signal transduction from surface cAMP receptor. Pianissimo a cytosolic regulator and CRAC, are both essential for activation of the enzyme adenylyl cyclase. Pianissimo and CRAC do not function redundantly. Both proteins are integral components of the adenylyl cyclase activation pathway. This is Protein CRAC (dagA) from Dictyostelium discoideum (Social amoeba).